Here is a 61-residue protein sequence, read N- to C-terminus: MAKKALIEKSNRKPKYAVRGYTRCQRCGRSRSVYRGFGLCRVCLRQMAHRGELPGVTKSSW.

Zn(2+) is bound by residues cysteine 24, cysteine 27, cysteine 40, and cysteine 43.

This sequence belongs to the universal ribosomal protein uS14 family. Zinc-binding uS14 subfamily. In terms of assembly, part of the 30S ribosomal subunit. Contacts proteins S3 and S10. Zn(2+) is required as a cofactor.

Its function is as follows. Binds 16S rRNA, required for the assembly of 30S particles and may also be responsible for determining the conformation of the 16S rRNA at the A site. The polypeptide is Small ribosomal subunit protein uS14 (Frankia casuarinae (strain DSM 45818 / CECT 9043 / HFP020203 / CcI3)).